The chain runs to 187 residues: Elongation factor P (187 aa).

This sequence belongs to the elongation factor P family.

It localises to the cytoplasm. Its pathway is protein biosynthesis; polypeptide chain elongation. Functionally, involved in peptide bond synthesis. Stimulates efficient translation and peptide-bond synthesis on native or reconstituted 70S ribosomes in vitro. Probably functions indirectly by altering the affinity of the ribosome for aminoacyl-tRNA, thus increasing their reactivity as acceptors for peptidyl transferase. The chain is Elongation factor P from Chromobacterium violaceum (strain ATCC 12472 / DSM 30191 / JCM 1249 / CCUG 213 / NBRC 12614 / NCIMB 9131 / NCTC 9757 / MK).